The following is a 298-amino-acid chain: Putative glycylpeptide N-tetradecanoyltransferase (298 aa).

It belongs to the NMT family.

It carries out the reaction N-terminal glycyl-[protein] + tetradecanoyl-CoA = N-tetradecanoylglycyl-[protein] + CoA + H(+). Adds a myristoyl group to the N-terminal glycine residue of certain proteins. This Melanoplus sanguinipes (Migratory grasshopper) protein is Putative glycylpeptide N-tetradecanoyltransferase.